The primary structure comprises 122 residues: Large ribosomal subunit protein uL14 (122 aa).

This sequence belongs to the universal ribosomal protein uL14 family. Part of the 50S ribosomal subunit. Forms a cluster with proteins L3 and L19. In the 70S ribosome, L14 and L19 interact and together make contacts with the 16S rRNA in bridges B5 and B8.

Functionally, binds to 23S rRNA. Forms part of two intersubunit bridges in the 70S ribosome. In Parafrankia sp. (strain EAN1pec), this protein is Large ribosomal subunit protein uL14.